The following is a 32-amino-acid chain: Putative leucine-rich repeat protein PS14 (32 aa).

In Pinus strobus (Eastern white pine), this protein is Putative leucine-rich repeat protein PS14.